The primary structure comprises 514 residues: Beta-glucosidase 21 (514 aa).

An N-terminal signal peptide occupies residues 1–25 (MERPLHLLLVFLSSPWLLLLQGVSS). A beta-D-glucoside contacts are provided by Q47 and H147. The Proton donor role is filled by E193. Residues C212 and C220 are joined by a disulfide bond. N219 and N224 each carry an N-linked (GlcNAc...) asparagine glycan. The a beta-D-glucoside site is built by Y336 and E406. The active-site Nucleophile is the E406. The N-linked (GlcNAc...) asparagine glycan is linked to N407. Residues W448 and F465 each coordinate a beta-D-glucoside. N-linked (GlcNAc...) asparagine glycosylation is present at N494.

It belongs to the glycosyl hydrolase 1 family.

It catalyses the reaction Hydrolysis of terminal, non-reducing beta-D-glucosyl residues with release of beta-D-glucose.. The polypeptide is Beta-glucosidase 21 (BGLU21) (Oryza sativa subsp. japonica (Rice)).